Reading from the N-terminus, the 430-residue chain is Glucose-6-phosphate isomerase (430 aa).

Glu-284 (proton donor) is an active-site residue. Residues His-305 and Lys-420 contribute to the active site.

Belongs to the GPI family.

It is found in the cytoplasm. The enzyme catalyses alpha-D-glucose 6-phosphate = beta-D-fructose 6-phosphate. It functions in the pathway carbohydrate biosynthesis; gluconeogenesis. It participates in carbohydrate degradation; glycolysis; D-glyceraldehyde 3-phosphate and glycerone phosphate from D-glucose: step 2/4. Its function is as follows. Catalyzes the reversible isomerization of glucose-6-phosphate to fructose-6-phosphate. The protein is Glucose-6-phosphate isomerase of Mycoplasma pneumoniae (strain ATCC 29342 / M129 / Subtype 1) (Mycoplasmoides pneumoniae).